A 537-amino-acid polypeptide reads, in one-letter code: Exoglucanase 1 (537 aa).

A signal peptide spans 1 to 18 (MKGSISYQIYKGALLLSA). Positions 19–453 (LLNSVSAQQV…YVIYSNIKTG (435 aa)) are catalytic. A glycan (N-linked (GlcNAc...) asparagine) is linked at Asn136. Glu235 functions as the Nucleophile in the catalytic mechanism. Glu240 functions as the Proton donor in the catalytic mechanism. Residues Asn414 and Asn456 are each glycosylated (N-linked (GlcNAc...) asparagine). Residues 454 to 477 (PLNSTFTGGTTSSSSTTTTTSKST) are linker. Residues 458–502 (TFTGGTTSSSSTTTTTSKSTSTSSSSKTTTTVTTTTTSSGSSGTG) are compositionally biased toward low complexity. The segment at 458 to 503 (TFTGGTTSSSSTTTTTSKSTSTSSSSKTTTTVTTTTTSSGSSGTGA) is disordered. A CBM1 domain is found at 501 to 537 (TGARDWAQCGGNGWTGPTTCVSPYTCTKQNDWYSQCL). Intrachain disulfides connect Cys509–Cys526 and Cys520–Cys536.

The protein belongs to the glycosyl hydrolase 7 (cellulase C) family.

Its subcellular location is the secreted. The catalysed reaction is Hydrolysis of (1-&gt;4)-beta-D-glucosidic linkages in cellulose and cellotetraose, releasing cellobiose from the non-reducing ends of the chains.. The protein is Exoglucanase 1 (cbh1) of Penicillium janthinellum (Penicillium vitale).